A 100-amino-acid chain; its full sequence is Large ribosomal subunit protein uL23 (100 aa).

Belongs to the universal ribosomal protein uL23 family. As to quaternary structure, part of the 50S ribosomal subunit. Contacts protein L29, and trigger factor when it is bound to the ribosome.

Its function is as follows. One of the early assembly proteins it binds 23S rRNA. One of the proteins that surrounds the polypeptide exit tunnel on the outside of the ribosome. Forms the main docking site for trigger factor binding to the ribosome. This chain is Large ribosomal subunit protein uL23, found in Mycolicibacterium vanbaalenii (strain DSM 7251 / JCM 13017 / BCRC 16820 / KCTC 9966 / NRRL B-24157 / PYR-1) (Mycobacterium vanbaalenii).